We begin with the raw amino-acid sequence, 176 residues long: Protein Dr1 (176 aa).

Ala2 carries the post-translational modification N-acetylalanine. Residues Thr12–Leu75 enclose the Histone-fold domain. The Nuclear localization signal signature appears at Lys100–Lys103. Phosphoserine is present on residues Ser105, Ser106, Ser166, and Ser167. Residues Gln152–Ser167 show a composition bias toward low complexity. The interval Gln152–Ile176 is disordered.

The protein belongs to the NC2 beta/DR1 family. Heterodimer with DRAP1. DR1 exists in solution as a homotetramer that dissociates during interaction with TBP and then, after complexing with TBP, reassociates at a slow rate, to reconstitute the tetramer. Interacts with NFIL3. Component of the ADA2A-containing complex (ATAC), composed of KAT14, KAT2A, TADA2L, TADA3L, ZZ3, MBIP, WDR5, YEATS2, CCDC101 and DR1. Phosphorylation regulates its interaction with TBP. Not phosphorylated when bound to DRAP1.

It localises to the nucleus. In terms of biological role, the association of the DR1/DRAP1 heterodimer with TBP results in a functional repression of both activated and basal transcription of class II genes. This interaction precludes the formation of a transcription-competent complex by inhibiting the association of TFIIA and/or TFIIB with TBP. Can bind to DNA on its own. Component of the ATAC complex, a complex with histone acetyltransferase activity on histones H3 and H4. This chain is Protein Dr1 (DR1), found in Homo sapiens (Human).